The primary structure comprises 244 residues: Sperm-egg fusion protein Juno (244 aa).

A signal peptide spans 1–19; it reads MAQWWQILLGLWAVLPTLA. 8 cysteine pairs are disulfide-bonded: Cys-27-Cys-55, Cys-47-Cys-95, Cys-56-Cys-99, Cys-79-Cys-166, Cys-86-Cys-137, Cys-126-Cys-200, Cys-130-Cys-180, and Cys-143-Cys-160. An important for interaction with IZUMO1 region spans residues 62–81; the sequence is WEAHLEEPLLFNFSMMHCGL. N-linked (GlcNAc...) asparagine glycosylation is present at Asn-73. N-linked (GlcNAc...) asparagine glycosylation occurs at Asn-185. Gly-222 is lipidated: GPI-anchor amidated glycine. Residues 223 to 244 constitute a propeptide that is removed on maturation; the sequence is SALAPQLSYTLPAFSLCLLFHP.

Belongs to the folate receptor family. As to quaternary structure, monomer. Interacts with IZUMO1; the interaction is direct. IZUMO1 and IZUMO1R/JUNO form a complex with 1:1 stoichiometry. Interacts with WDR54. In terms of processing, the protein is rapidly cleaved following fertilization, being only weakly detectable in zona-intact fertilized eggs at telophase II and undetectable at the pronuclear stage. Sheding is probably required to block to polyspermy and ensuring egg fusion with a single sperm. Widely expressed with higher expression in thymus, spleen and lung. Present at the cell surface of unfertilized oocytes, while it is barely detectable 30 to 40 minutes after fertilization (at protein level).

The protein resides in the cell membrane. Receptor for IZUMO1 present at the cell surface of oocytes (oolemma), which is essential for species-specific gamete recognition and fertilization. The IZUMO1:IZUMO1R/JUNO interaction is a necessary adhesion event between sperm and egg that is required for fertilization but is not sufficient for cell fusion. The ligand-receptor interaction probably does not act as a membrane 'fusogen'. Does not bind folate. This chain is Sperm-egg fusion protein Juno, found in Mus musculus (Mouse).